Consider the following 120-residue polypeptide: uncharacterized protein (120 aa).

The chain crosses the membrane as a helical span at residues 40 to 62 (SFLTDALLNLIYILFFSSSVFNW).

The protein localises to the membrane. This is an uncharacterized protein from Saccharomyces cerevisiae (strain ATCC 204508 / S288c) (Baker's yeast).